Here is a 139-residue protein sequence, read N- to C-terminus: Large ribosomal subunit protein mL42 (139 aa).

A mitochondrion-targeting transit peptide spans 1–32; the sequence is MAVAAVKWVMSKRTILKHLFPVQNGALYCVCH.

It belongs to the mitochondrion-specific ribosomal protein mL42 family. Component of the mitochondrial ribosome large subunit (39S) which comprises a 16S rRNA and about 50 distinct proteins. Component of the mitochondrial ribosome small subunit (28S) which comprises a 12S rRNA and about 30 distinct proteins.

The protein resides in the mitochondrion. In Pongo abelii (Sumatran orangutan), this protein is Large ribosomal subunit protein mL42 (MRPL42).